The primary structure comprises 80 residues: UPF0346 protein LSEI_1394 (80 aa).

Belongs to the UPF0346 family.

The polypeptide is UPF0346 protein LSEI_1394 (Lacticaseibacillus paracasei (strain ATCC 334 / BCRC 17002 / CCUG 31169 / CIP 107868 / KCTC 3260 / NRRL B-441) (Lactobacillus paracasei)).